Consider the following 358-residue polypeptide: MSPSLVDNHAAAYIAAPSSAKAPMIQKPGNTFGMSSPIESKFLSQPRDLGIVAVGFSGGQCKPGVDAAPSALIESGLLTQLREELGYRLHGDDEVHLYTDLVPKEDPPHRNMKNPRAVSNVTKRIAEQVHSHAKEGRLVLTLGGDHSIAIGTIAGSAKAIKERLGREIAVIWVDAHADINTPETSGSGNIHGMPVSFLTGLASEDKEEFFGWLKPDHLLSVKKLVYIGLRDVDPGEKRILRENGIKAFSMHDIDKHGIGRVMEMALGHIGNDTPIHLSFDVDALDPMWAPSTGTPVRGGLTLREGDFICECVHETGSLVAVDLVEVNPTLAAPNDVGAHETVRAGCSLVRCALGESLL.

4 residues coordinate Mn(2+): His146, Asp174, His176, and Asp178. Substrate-binding positions include 176–180, 187–189, and Asp233; these read HADIN and SGN. Asp280 and Asp282 together coordinate Mn(2+). Substrate is bound by residues Thr294 and Glu325.

The protein belongs to the arginase family. As to quaternary structure, homohexamer. The cofactor is Mn(2+).

The protein localises to the cytoplasm. The catalysed reaction is L-arginine + H2O = urea + L-ornithine. Its pathway is nitrogen metabolism; urea cycle; L-ornithine and urea from L-arginine: step 1/1. This is Arginase (aga-1) from Neurospora crassa (strain ATCC 24698 / 74-OR23-1A / CBS 708.71 / DSM 1257 / FGSC 987).